A 323-amino-acid chain; its full sequence is Viral cathepsin (323 aa).

A signal peptide spans 1–16 (MNKILFYLFVYGVVNS). The propeptide at 17–112 (AAYDLLKAPN…IVLDQPPGKG (96 aa)) is activation peptide. 3 disulfide bridges follow: cysteine 133–cysteine 174, cysteine 167–cysteine 207, and cysteine 262–cysteine 310. Cysteine 136 is an active-site residue. Asparagine 158 carries an N-linked (GlcNAc...) asparagine; by host glycan. Residues histidine 269 and asparagine 289 contribute to the active site.

It belongs to the peptidase C1 family. Post-translationally, synthesized as an inactive proenzyme and activated by proteolytic removal of the inhibitory propeptide.

The enzyme catalyses Endopeptidase of broad specificity, hydrolyzing substrates of both cathepsin L and cathepsin B.. In terms of biological role, cysteine protease that plays an essential role in host liquefaction to facilitate horizontal transmission of the virus. May participate in the degradation of foreign protein expressed by the baculovirus system. The chain is Viral cathepsin (VCATH) from Helicoverpa zea (Corn earworm moth).